The primary structure comprises 156 residues: MKLQLIAVGTKMPDWVTRGFEEYQRRFPRDMALELIEIPAGKRGKNADIARILHKEGELMLAAVAKGNHIVSLDLPGKNWTTPELAEQMTKWQLDGRDVSLLIGGPEGLSPACKEAANQSWCLSALTLPHPLVRVIVAESLYRAWSVNTNHPYHRE.

S-adenosyl-L-methionine contacts are provided by residues L73, G104, and 123–128 (LSALTL).

This sequence belongs to the RNA methyltransferase RlmH family. As to quaternary structure, homodimer.

The protein localises to the cytoplasm. It catalyses the reaction pseudouridine(1915) in 23S rRNA + S-adenosyl-L-methionine = N(3)-methylpseudouridine(1915) in 23S rRNA + S-adenosyl-L-homocysteine + H(+). In terms of biological role, specifically methylates the pseudouridine at position 1915 (m3Psi1915) in 23S rRNA. The polypeptide is Ribosomal RNA large subunit methyltransferase H (Shewanella frigidimarina (strain NCIMB 400)).